The sequence spans 333 residues: Ribosomal RNA small subunit methyltransferase H (333 aa).

S-adenosyl-L-methionine-binding positions include 43 to 45 (GGH), D62, Y89, D110, and Q117. The disordered stretch occupies residues 312 to 333 (RLRAARRIRTTPTRPSPRRRRP).

This sequence belongs to the methyltransferase superfamily. RsmH family.

The protein localises to the cytoplasm. The enzyme catalyses cytidine(1402) in 16S rRNA + S-adenosyl-L-methionine = N(4)-methylcytidine(1402) in 16S rRNA + S-adenosyl-L-homocysteine + H(+). Specifically methylates the N4 position of cytidine in position 1402 (C1402) of 16S rRNA. The polypeptide is Ribosomal RNA small subunit methyltransferase H (Beutenbergia cavernae (strain ATCC BAA-8 / DSM 12333 / CCUG 43141 / JCM 11478 / NBRC 16432 / NCIMB 13614 / HKI 0122)).